Reading from the N-terminus, the 128-residue chain is Conopressin-conophysin (128 aa).

A signal peptide spans 1–27 (MTRSAMQMGRLTLVLCLLLLLLLTTQA). Cysteine 28 and cysteine 33 are joined by a disulfide. Glycine 36 carries the post-translational modification Glycine amide. A propeptide spanning residues 37–44 (GKRDVDER) is cleaved from the precursor. 7 disulfides stabilise this stretch: cysteine 50/cysteine 90, cysteine 53/cysteine 64, cysteine 58/cysteine 80, cysteine 65/cysteine 70, cysteine 97/cysteine 115, cysteine 109/cysteine 127, and cysteine 116/cysteine 121.

This sequence belongs to the vasopressin/oxytocin family. As to expression, expressed by the venom gland.

It is found in the secreted. In terms of biological role, targets vasopressin-oxytocin related receptors. Is more active on fish receptors than on their human counterparts, supporting an evolved role of this conopressin in the envenomation process. Acts as an agonist on zebrafish vasopressin receptors V1a1R (EC(50)=10.6 nM), V1a2R (EC(50)=44.06 nM, partial agonist), V2R (EC(50)=299.2 nM) and oxytocin receptor (EC(50)=353.73 nM, partial agonist). Shows a weaker activity on human receptors AVPR1B (EC(50)=51.92 nM), AVPR1A (EC(50)=123.78 nM), AVPR2 (EC(50)=299.2 nM) and oxytocin (OXTR) receptor (EC(50)=455.66 nM, partial agonist). In vivo, exhibits grooming and scratching behavior in mice, following intracerebral injection. The protein is Conopressin-conophysin of Conus geographus (Geography cone).